The sequence spans 372 residues: Galanin receptor type 2 (372 aa).

Residues 1 to 28 lie on the Extracellular side of the membrane; that stretch reads MNGSGSQGAENTSQEGGSGGWQPEAVLV. N-linked (GlcNAc...) asparagine glycosylation is found at N2 and N11. Residues 29–49 traverse the membrane as a helical segment; that stretch reads PLFFALIFLVGTVGNALVLAV. The Cytoplasmic portion of the chain corresponds to 50–60; sequence LLRGGQAVSTT. Residues 61–81 form a helical membrane-spanning segment; sequence NLFILNLGVADLCFILCCVPF. Topologically, residues 82–99 are extracellular; it reads QATIYTLDDWVFGSLLCK. Residues C98 and C175 are joined by a disulfide bond. A helical transmembrane segment spans residues 100–121; sequence AVHFLIFLTMHASSFTLAAVSL. At 122–141 the chain is on the cytoplasmic side; sequence DRYLAIRYPLHSRELRTPRN. The helical transmembrane segment at 142–162 threads the bilayer; the sequence is ALAAIGLIWGLALLFSGPYLS. Residues 163–187 lie on the Extracellular side of the membrane; sequence YYRQSQLANLTVCHPAWSAPRRRAM. A helical transmembrane segment spans residues 188-208; it reads DLCTFVFSYLLPVLVLSLTYA. Residues 209–237 are Cytoplasmic-facing; that stretch reads RTLRYLWRTVDPVTAGSGSQRAKRKVTRM. Residues 238–258 traverse the membrane as a helical segment; that stretch reads IIIVAVLFCLCWMPHHALILC. Residues 259–260 lie on the Extracellular side of the membrane; sequence VW. Residues 261–281 form a helical membrane-spanning segment; the sequence is FGRFPLTRATYALRILSHLVS. The Cytoplasmic portion of the chain corresponds to 282–372; that stretch reads YANSCVNPIV…ASSRTLDPAC (91 aa). The segment at 353 to 372 is disordered; the sequence is VPPPALPNCTASSRTLDPAC. Positions 361–372 are enriched in polar residues; that stretch reads CTASSRTLDPAC.

The protein belongs to the G-protein coupled receptor 1 family.

The protein resides in the cell membrane. Its function is as follows. Receptor for the hormone galanin, GALP and spexin-1. The activity of this receptor is mediated by G proteins that activate the phospholipase C/protein kinase C pathway (via G(q)) and that inhibit adenylyl cyclase (via G(i)). The protein is Galanin receptor type 2 (Galr2) of Rattus norvegicus (Rat).